Consider the following 274-residue polypeptide: Phosphate import ATP-binding protein PstB (274 aa).

Over residues 1-11 the composition is skewed to polar residues; sequence MSEISIATSVP. Residues 1-21 form a disordered region; that stretch reads MSEISIATSVPSGPGPLIGNQ. The region spanning 28 to 269 is the ABC transporter domain; it reads VIVRDLNFYY…PNDRRTQDYI (242 aa). Residue 60 to 67 coordinates ATP; that stretch reads GPSGCGKS.

Belongs to the ABC transporter superfamily. Phosphate importer (TC 3.A.1.7) family. As to quaternary structure, the complex is composed of two ATP-binding proteins (PstB), two transmembrane proteins (PstC and PstA) and a solute-binding protein (PstS).

It localises to the cell inner membrane. It carries out the reaction phosphate(out) + ATP + H2O = ADP + 2 phosphate(in) + H(+). In terms of biological role, part of the ABC transporter complex PstSACB involved in phosphate import. Responsible for energy coupling to the transport system. This chain is Phosphate import ATP-binding protein PstB, found in Rhodopseudomonas palustris (strain BisB5).